We begin with the raw amino-acid sequence, 397 residues long: Phosphoglycerate kinase (397 aa).

Substrate-binding positions include 21–23 (DFN), R36, 59–62 (HCGR), R118, and R151. Residues K201, E323, and 353–356 (GGDT) contribute to the ATP site.

The protein belongs to the phosphoglycerate kinase family. As to quaternary structure, monomer.

The protein localises to the cytoplasm. It catalyses the reaction (2R)-3-phosphoglycerate + ATP = (2R)-3-phospho-glyceroyl phosphate + ADP. It functions in the pathway carbohydrate degradation; glycolysis; pyruvate from D-glyceraldehyde 3-phosphate: step 2/5. In Bartonella henselae (strain ATCC 49882 / DSM 28221 / CCUG 30454 / Houston 1) (Rochalimaea henselae), this protein is Phosphoglycerate kinase.